Reading from the N-terminus, the 193-residue chain is dCTP deaminase (193 aa).

DCTP contacts are provided by residues 110-115 (RSSLAR), Asp128, 136-138 (VLE), Tyr171, Lys178, and Gln182. The active-site Proton donor/acceptor is the Glu138. Positions 171–193 (YHQRQDAKYHNQKGAVASRIDKD) are disordered.

Belongs to the dCTP deaminase family. In terms of assembly, homotrimer.

It catalyses the reaction dCTP + H2O + H(+) = dUTP + NH4(+). It participates in pyrimidine metabolism; dUMP biosynthesis; dUMP from dCTP (dUTP route): step 1/2. Catalyzes the deamination of dCTP to dUTP. The polypeptide is dCTP deaminase (Hamiltonella defensa subsp. Acyrthosiphon pisum (strain 5AT)).